Consider the following 123-residue polypeptide: MELNMLKSKIHRVTVTQAELSYVGSITIDKALMKAANILEYEKVQIVDIDNGARFETYVIPGEENSKVICLNGAAARCVQVGDKVIIMCYCSMDEQEAKDYKPIVVFANEDNTINKISNYERN.

Residue serine 25 is the Schiff-base intermediate with substrate; via pyruvic acid of the active site. Serine 25 bears the Pyruvic acid (Ser) mark. Threonine 57 provides a ligand contact to substrate. Tyrosine 58 functions as the Proton donor in the catalytic mechanism. 73–75 (GAA) is a binding site for substrate.

Belongs to the PanD family. In terms of assembly, heterooctamer of four alpha and four beta subunits. Pyruvate is required as a cofactor. Is synthesized initially as an inactive proenzyme, which is activated by self-cleavage at a specific serine bond to produce a beta-subunit with a hydroxyl group at its C-terminus and an alpha-subunit with a pyruvoyl group at its N-terminus.

Its subcellular location is the cytoplasm. The enzyme catalyses L-aspartate + H(+) = beta-alanine + CO2. Its pathway is cofactor biosynthesis; (R)-pantothenate biosynthesis; beta-alanine from L-aspartate: step 1/1. Catalyzes the pyruvoyl-dependent decarboxylation of aspartate to produce beta-alanine. This chain is Aspartate 1-decarboxylase, found in Clostridium novyi (strain NT).